The sequence spans 512 residues: Colistin resistance protein EmrB (512 aa).

The next 14 membrane-spanning stretches (helical) occupy residues 17-37, 55-75, 84-104, 115-135, 144-164, 169-189, 205-225, 234-254, 280-300, 314-334, 341-361, 376-396, 412-432, and 486-506; these read WAIF…IQIV, VTWV…MSSI, VYYT…ALSW, IQGF…YLLF, LVMF…IGGW, FSWH…ATVI, SMDW…EYFL, LADT…MIFF, ITTF…PVFL, VMMV…WLIP, TVFV…HLSI, GIGL…TLPL, IGGA…TAMH, and FNDL…LTIF.

The protein belongs to the major facilitator superfamily. EmrB family.

It localises to the cell inner membrane. Functionally, probably part of an efflux pump system that contributes to adaptation to osmotic stress and resistance to colistin. This chain is Colistin resistance protein EmrB, found in Acinetobacter baumannii (strain ATCC 17978 / DSM 105126 / CIP 53.77 / LMG 1025 / NCDC KC755 / 5377).